The chain runs to 229 residues: 7-cyano-7-deazaguanine synthase (229 aa).

15 to 25 is a binding site for ATP; it reads LSGGLDSTTCL. Residues Cys-192, Cys-202, Cys-205, and Cys-208 each contribute to the Zn(2+) site.

The protein belongs to the QueC family. It depends on Zn(2+) as a cofactor.

It catalyses the reaction 7-carboxy-7-deazaguanine + NH4(+) + ATP = 7-cyano-7-deazaguanine + ADP + phosphate + H2O + H(+). It functions in the pathway purine metabolism; 7-cyano-7-deazaguanine biosynthesis. Catalyzes the ATP-dependent conversion of 7-carboxy-7-deazaguanine (CDG) to 7-cyano-7-deazaguanine (preQ(0)). The polypeptide is 7-cyano-7-deazaguanine synthase (Acinetobacter baylyi (strain ATCC 33305 / BD413 / ADP1)).